A 185-amino-acid chain; its full sequence is MKKTALDIIEHAEEHLIEKIAENMHTFGMPSTVGRVLGIIYMNRKPMTLSELSEATGMSKTRMSQVVREMIDANIAEKVFEKGVRKDLYDVEQDYYQTFISLFAANWTKVVSKNKVLYKKLNRELSDLLQRDGLTPEAEEKVNQLLNELKEWLHYYDWLSRLIEFFESEEVFRYVPKTKECSSLK.

Positions 49-73 form a DNA-binding region, H-T-H motif; that stretch reads LSELSEATGMSKTRMSQVVREMIDA.

This sequence belongs to the GbsR family.

Its activity is regulated as follows. Is not choline-responsive. Functionally, negatively regulates the transcription of the opuC operon. In the absence of GbsR, is also a negative regulator of the opuB operon. Binds to an inverted repeat in the promoter region of the operons. The polypeptide is HTH-type transcriptional repressor OpcR (opcR) (Bacillus subtilis (strain 168)).